The chain runs to 492 residues: UPF0236 protein TTE0402 (492 aa).

This sequence belongs to the UPF0236 family.

This is UPF0236 protein TTE0402 from Caldanaerobacter subterraneus subsp. tengcongensis (strain DSM 15242 / JCM 11007 / NBRC 100824 / MB4) (Thermoanaerobacter tengcongensis).